We begin with the raw amino-acid sequence, 427 residues long: Serine hydroxymethyltransferase (427 aa).

120–122 provides a ligand contact to (6S)-5,6,7,8-tetrahydrofolate; sequence GHI. An N6-(pyridoxal phosphate)lysine modification is found at Lys226. Glu243 serves as a coordination point for (6S)-5,6,7,8-tetrahydrofolate.

The protein belongs to the SHMT family. As to quaternary structure, homodimer. Pyridoxal 5'-phosphate is required as a cofactor.

It localises to the cytoplasm. Its pathway is amino-acid biosynthesis; glycine biosynthesis; glycine from L-serine: step 1/1. Catalyzes the reversible interconversion of serine and glycine with a modified folate serving as the one-carbon carrier. Also exhibits a pteridine-independent aldolase activity toward beta-hydroxyamino acids, producing glycine and aldehydes, via a retro-aldol mechanism. The sequence is that of Serine hydroxymethyltransferase from Thermococcus gammatolerans (strain DSM 15229 / JCM 11827 / EJ3).